The sequence spans 85 residues: Phycobilisome 9.7 kDa linker polypeptide, phycocyanin-associated, rod (85 aa).

Residues 16 to 74 form the CpcD-like domain; it reads NRVFVYEVEGLRQNEQTDNNRYQIRNSSTIEIQVPYSRMNEEDRRITRLGGRIVNIRPA.

Belongs to the phycobilisome linker protein family.

It localises to the cellular thylakoid membrane. Rod linker protein, associated with phycocyanin. Linker polypeptides determine the state of aggregation and the location of the disk-shaped phycobiliprotein units within the phycobilisome and modulate their spectroscopic properties in order to mediate a directed and optimal energy transfer. The polypeptide is Phycobilisome 9.7 kDa linker polypeptide, phycocyanin-associated, rod (cpcD2) (Microchaete diplosiphon (Fremyella diplosiphon)).